We begin with the raw amino-acid sequence, 648 residues long: Cysteine-rich receptor-like protein kinase 38 (648 aa).

Positions 1–25 are cleaved as a signal peptide; that stretch reads MKNSAAIFLTSSLILLLQTLHGVKA. 2 consecutive Gnk2-homologous domains span residues 26-127 and 140-247; these read GFIC…DQST and PSPV…FYPF. At 26-278 the chain is on the extracellular side; the sequence is GFICVGSSFP…EAISITRLKG (253 aa). N-linked (GlcNAc...) asparagine glycosylation is found at Asn37, Asn63, Asn151, Asn174, and Asn253. The chain crosses the membrane as a helical span at residues 279-299; it reads GIIAIFVVPIVINLLVFIGLI. At 300–648 the chain is on the cytoplasmic side; it reads RAYTRIRKSY…ELSITELSPR (349 aa). The Protein kinase domain maps to 339 to 611; that stretch reads FSFENKIGQG…VIQWLGSETI (273 aa). Residues 345–353 and Lys367 contribute to the ATP site; that span reads IGQGGFGSV. Tyr412 carries the phosphotyrosine modification. Asp464 (proton acceptor) is an active-site residue. At Ser468 the chain carries Phosphoserine. Thr504 is modified (phosphothreonine). Residue Tyr512 is modified to Phosphotyrosine.

The protein belongs to the protein kinase superfamily. Ser/Thr protein kinase family. CRK subfamily.

It localises to the membrane. The enzyme catalyses L-seryl-[protein] + ATP = O-phospho-L-seryl-[protein] + ADP + H(+). The catalysed reaction is L-threonyl-[protein] + ATP = O-phospho-L-threonyl-[protein] + ADP + H(+). The sequence is that of Cysteine-rich receptor-like protein kinase 38 (CRK38) from Arabidopsis thaliana (Mouse-ear cress).